A 271-amino-acid chain; its full sequence is 60 kDa heat shock protein, mitochondrial (271 aa).

Phosphoserine is present on residues Ser-30 and Ser-33. ATP is bound at residue 50 to 54; it reads DGTTT. Lys-83 carries the N6-acetyllysine modification. N6-acetyllysine; alternate is present on residues Lys-84, Lys-97, and Lys-112. 3 positions are modified to N6-succinyllysine; alternate: Lys-84, Lys-97, and Lys-112. Lys-125 carries the N6-acetyllysine modification. Residue Lys-126 is modified to N6-acetyllysine; alternate. Lys-126 is subject to N6-succinyllysine; alternate. At Lys-145 the chain carries N6-acetyllysine. Lys-175 is modified (N6-succinyllysine). Residues Lys-188 and Lys-237 each carry the N6-acetyllysine modification. Gly-257 contacts ATP. Lys-270 bears the N6-acetyllysine mark.

The protein belongs to the chaperonin (HSP60) family. As to quaternary structure, homoheptamer arranged in a ring structure. The functional units of these chaperonins consist of heptameric rings of the large subunit Hsp60, which function as a back-to-back double ring. Interacts with 2 heptameric Hsp10 rings to form the symmetrical football complex. Interacts with HRAS. Interacts with ATAD3A. Interacts with ETFBKMT and EEF1AKMT3. Interacts with MFHAS1. As to expression, detected at higher levels in caput epididymal spermatazoa than in cauda epididymal spermatazoa (at protein level).

The protein resides in the mitochondrion matrix. It carries out the reaction ATP + H2O + a folded polypeptide = ADP + phosphate + an unfolded polypeptide.. In terms of biological role, chaperonin implicated in mitochondrial protein import and macromolecular assembly. Together with Hsp10, facilitates the correct folding of imported proteins. May also prevent misfolding and promote the refolding and proper assembly of unfolded polypeptides generated under stress conditions in the mitochondrial matrix. The functional units of these chaperonins consist of heptameric rings of the large subunit Hsp60, which function as a back-to-back double ring. In a cyclic reaction, Hsp60 ring complexes bind one unfolded substrate protein per ring, followed by the binding of ATP and association with 2 heptameric rings of the co-chaperonin Hsp10. This leads to sequestration of the substrate protein in the inner cavity of Hsp60 where, for a certain period of time, it can fold undisturbed by other cell components. Synchronous hydrolysis of ATP in all Hsp60 subunits results in the dissociation of the chaperonin rings and the release of ADP and the folded substrate protein. The sequence is that of 60 kDa heat shock protein, mitochondrial from Mesocricetus auratus (Golden hamster).